Here is a 101-residue protein sequence, read N- to C-terminus: Small ribosomal subunit protein uS14 (101 aa).

This sequence belongs to the universal ribosomal protein uS14 family. As to quaternary structure, part of the 30S ribosomal subunit. Contacts proteins S3 and S10.

Binds 16S rRNA, required for the assembly of 30S particles and may also be responsible for determining the conformation of the 16S rRNA at the A site. In Janthinobacterium sp. (strain Marseille) (Minibacterium massiliensis), this protein is Small ribosomal subunit protein uS14.